We begin with the raw amino-acid sequence, 231 residues long: MTEPNDTGPALQAEHLGKVYDEGPARIEVLSDVSLSVARGEMVAIVGASGSGKSTLLHILGLLDVPSSGTVSVDGVPAAGLSEKRKSALRNRSLGFVYQFHHLLPEFSALDNVAMPLIVRRENRDRARAQAREVLELVGLAAREEHFPGQLSGGERQRVALARALVTRPACVLADEPTGNLDRHTAHNMFELLTRVNRESGTAFVIVTHDPELAARADRQLHMENGRLQPD.

The 221-residue stretch at 11-231 (LQAEHLGKVY…HMENGRLQPD (221 aa)) folds into the ABC transporter domain. Residue 47-54 (GASGSGKS) coordinates ATP.

It belongs to the ABC transporter superfamily. Lipoprotein translocase (TC 3.A.1.125) family. In terms of assembly, the complex is composed of two ATP-binding proteins (LolD) and two transmembrane proteins (LolC and LolE).

Its subcellular location is the cell inner membrane. Functionally, part of the ABC transporter complex LolCDE involved in the translocation of mature outer membrane-directed lipoproteins, from the inner membrane to the periplasmic chaperone, LolA. Responsible for the formation of the LolA-lipoprotein complex in an ATP-dependent manner. This is Lipoprotein-releasing system ATP-binding protein LolD from Bordetella bronchiseptica (strain ATCC BAA-588 / NCTC 13252 / RB50) (Alcaligenes bronchisepticus).